Consider the following 361-residue polypeptide: Phosphoserine aminotransferase (361 aa).

Residue R42 participates in L-glutamate binding. Residues 76–77 (AT), W102, T152, D172, and Q195 each bind pyridoxal 5'-phosphate. N6-(pyridoxal phosphate)lysine is present on K196. Position 237-238 (237-238 (NT)) interacts with pyridoxal 5'-phosphate.

It belongs to the class-V pyridoxal-phosphate-dependent aminotransferase family. SerC subfamily. As to quaternary structure, homodimer. Pyridoxal 5'-phosphate is required as a cofactor.

Its subcellular location is the cytoplasm. The catalysed reaction is O-phospho-L-serine + 2-oxoglutarate = 3-phosphooxypyruvate + L-glutamate. It carries out the reaction 4-(phosphooxy)-L-threonine + 2-oxoglutarate = (R)-3-hydroxy-2-oxo-4-phosphooxybutanoate + L-glutamate. It functions in the pathway amino-acid biosynthesis; L-serine biosynthesis; L-serine from 3-phospho-D-glycerate: step 2/3. It participates in cofactor biosynthesis; pyridoxine 5'-phosphate biosynthesis; pyridoxine 5'-phosphate from D-erythrose 4-phosphate: step 3/5. Functionally, catalyzes the reversible conversion of 3-phosphohydroxypyruvate to phosphoserine and of 3-hydroxy-2-oxo-4-phosphonooxybutanoate to phosphohydroxythreonine. The chain is Phosphoserine aminotransferase from Xanthomonas oryzae pv. oryzae (strain MAFF 311018).